The chain runs to 380 residues: GATOR1 complex protein NPRL2 (380 aa).

The interval 1 to 133 (MGSSCRIECI…SKQKLVPIMT (133 aa)) is interaction with PDPK1. Residue Arg-78 coordinates GDP. Asymmetric dimethylarginine is present on Arg-78. Residues Lys-158 and Lys-357 each participate in a glycyl lysine isopeptide (Lys-Gly) (interchain with G-Cter in ubiquitin) cross-link.

This sequence belongs to the NPR2 family. In terms of assembly, within the GATOR complex, component of the GATOR1 subcomplex, made of DEPDC5, NPRL2 and NPRL3. GATOR1 mediates the strong interaction of the GATOR complex with small GTPases Rag (RagA/RRAGA, RagB/RRAGB, RagC/RRAGC and/or RagD/RRAGD) heterodimers. GATOR1 interacts with GPR155/LYCHOS; interaction takes place in presence of cholesterol and prevents interaction between GATOR1 and KICSTOR. Interacts with PDPK1. In the presence of abundant amino acids, ubiquitinated at Lys-158 and Lys-357 via 'Lys-6'-linked ubiquitination by the WDR24 component of the GATOR2 complex, thereby inhibiting the GATOR1 complex and promoting mTORC1 activation. In terms of processing, asymmetric dimethylation at Arg-78 by PRMT1 inhibits the GTPase activator activity of the GATOR1 complex and consequently inducing timely mTORC1 activation under methionine-sufficient conditions.

The protein localises to the lysosome membrane. In terms of biological role, catalytic component of the GATOR1 complex, a multiprotein complex that functions as an inhibitor of the amino acid-sensing branch of the mTORC1 pathway. In response to amino acid depletion, the GATOR1 complex has GTPase activating protein (GAP) activity and strongly increases GTP hydrolysis by RagA/RRAGA (or RagB/RRAGB) within heterodimeric Rag complexes, thereby turning them into their inactive GDP-bound form, releasing mTORC1 from lysosomal surface and inhibiting mTORC1 signaling. In the presence of abundant amino acids, the GATOR1 complex is ubiquitinated and inhibited by GATOR2. Within the GATOR1 complex, NPRL2 constitutes the catalytic subunit that mediates the GTPase activator activity and under methionine-sufficient conditions, the GTPase activator activity is inhibited by PRMT1 through methylation and consequently inducing timely mTORC1 activation. Suppresses Src-dependent tyrosine phosphorylation and activation of PDPK1 and its downstream signaling. Down-regulates PDPK1 kinase activity by interfering with tyrosine phosphorylation at 'Tyr-9', 'Tyr-373' and 'Tyr-376' residues. May act as a tumor suppressor. Suppresses cell growth and enhances sensitivity to various anticancer drugs. This is GATOR1 complex protein NPRL2 from Bos taurus (Bovine).